Consider the following 138-residue polypeptide: MRTLWIMAVLLVGVDGSLVQLWKMIFQETGKEAAKNYGLYGCNCGVGRRGKPKDATDSCCYVHKCCYKKVTGCNPKMDSYSYSWKNKAIVCGENNPPCLKQVCECDKAVAICLRENLGTYNKKYTIYPKPFCKKADTC.

An N-terminal signal peptide occupies residues 1-16 (MRTLWIMAVLLVGVDG). 7 disulfides stabilise this stretch: cysteine 42–cysteine 132, cysteine 44–cysteine 60, cysteine 59–cysteine 112, cysteine 65–cysteine 138, cysteine 66–cysteine 105, cysteine 73–cysteine 98, and cysteine 91–cysteine 103. The Ca(2+) site is built by glycine 45 and glycine 47. Histidine 63 is a catalytic residue. Residue aspartate 106 is part of the active site.

It belongs to the phospholipase A2 family. Group II subfamily. K49 sub-subfamily. Ca(2+) serves as cofactor. Expressed by the venom gland.

It localises to the secreted. It carries out the reaction a 1,2-diacyl-sn-glycero-3-phosphocholine + H2O = a 1-acyl-sn-glycero-3-phosphocholine + a fatty acid + H(+). Functionally, snake venom phospholipase A2 (PLA2) that has low phospholipase A2 activity. Shows anticoagulant activities, strong myolytic activity, infiltration of polymorphonuclear cells, and edema in stromal tissues. Induces cell death of Jurkat cells in a concentration dependent manner. PLA2 catalyzes the calcium-dependent hydrolysis of the 2-acyl groups in 3-sn-phosphoglycerides. The protein is Basic phospholipase A2 BP-III of Protobothrops flavoviridis (Habu).